Reading from the N-terminus, the 664-residue chain is Sulfoquinovosidase (664 aa).

3-(6-sulfo-alpha-D-quinovosyl)glycerol contacts are provided by Glu135, Glu270, Arg283, Leu284, and Trp286. Asp388 functions as the Nucleophile in the catalytic mechanism. Glu391 is an active-site residue. Arg438 lines the 3-(6-sulfo-alpha-D-quinovosyl)glycerol pocket. Asp455 acts as the Proton donor in catalysis. His520 serves as a coordination point for 3-(6-sulfo-alpha-D-quinovosyl)glycerol.

The protein belongs to the glycosyl hydrolase 31 family.

It catalyses the reaction 3-(6-sulfo-alpha-D-quinovosyl)glycerol + H2O = 6-sulfo-alpha-D-quinovose + glycerol. Part of the sulfoquinovose monooxygenase (sulfo-SMO) pathway, a D-sulfoquinovose degradation pathway that enables the complete utilization of all carbons within sulfoquinovose (SQ) with concomitant production of inorganic sulfite. Catalyzes the first step of the pathway, the hydrolysis of sulfoquinovosyl glycerol (SQGro) to release sulfoquinovose (SQ). Hydrolyzes both epimers of SQGro, with a preference for the natural 2'R isomer. In vitro, can use the substrate analog para-nitrophenyl alpha-sulfoquinovoside (PNPSQ), but shows no detectable activity toward 4-nitrophenyl alpha-D-glucopyranoside (PNPGlc). In Agrobacterium fabrum (strain C58 / ATCC 33970) (Agrobacterium tumefaciens (strain C58)), this protein is Sulfoquinovosidase.